A 141-amino-acid polypeptide reads, in one-letter code: Nucleoside diphosphate kinase (141 aa).

K11, F59, R87, T93, R104, and N114 together coordinate ATP. The active-site Pros-phosphohistidine intermediate is the H117.

The protein belongs to the NDK family. In terms of assembly, homotetramer. The cofactor is Mg(2+).

It is found in the cytoplasm. The catalysed reaction is a 2'-deoxyribonucleoside 5'-diphosphate + ATP = a 2'-deoxyribonucleoside 5'-triphosphate + ADP. It carries out the reaction a ribonucleoside 5'-diphosphate + ATP = a ribonucleoside 5'-triphosphate + ADP. Major role in the synthesis of nucleoside triphosphates other than ATP. The ATP gamma phosphate is transferred to the NDP beta phosphate via a ping-pong mechanism, using a phosphorylated active-site intermediate. In Paracidovorax citrulli (strain AAC00-1) (Acidovorax citrulli), this protein is Nucleoside diphosphate kinase.